The sequence spans 649 residues: ATP-dependent DNA helicase Q1 (649 aa).

In terms of domain architecture, Helicase ATP-binding spans I100 to F275. M113 to G120 contacts ATP. Positions D219–H222 match the DEVH box motif. Residues F300–S451 form the Helicase C-terminal domain. 4 residues coordinate Zn(2+): C453, C471, C475, and C478. Residues K514 and K522 each carry the N6-acetyllysine modification. Residues S597 and S602 each carry the phosphoserine modification. Over residues S597–S608 the composition is skewed to polar residues. The interval S597–A649 is disordered. Positions E609–N619 are enriched in basic and acidic residues. A compositionally biased stretch (polar residues) spans M630 to T639. At S634 the chain carries Phosphoserine. Positions G640–A649 are enriched in basic residues.

This sequence belongs to the helicase family. RecQ subfamily. May form homodimers or higher order oligomers. Interacts with EXO1. Interacts with MLH1. Interacts with PARP1. It depends on Mg(2+) as a cofactor. The cofactor is Mn(2+). Zn(2+) serves as cofactor.

It localises to the nucleus. It carries out the reaction Couples ATP hydrolysis with the unwinding of duplex DNA by translocating in the 3'-5' direction.. The catalysed reaction is ATP + H2O = ADP + phosphate + H(+). It catalyses the reaction dATP + H2O = dADP + phosphate + H(+). Its function is as follows. DNA helicase that plays a role in DNA damage repair and genome stability. Exhibits a magnesium- and ATP-dependent DNA-helicase activity that unwinds single- and double-stranded DNA in a 3'-5' direction. Plays a role in restoring regressed replication forks. Required to restart stalled replication forks induced by abortive topoisomerase 1 and 2 lesions. May play a role in the repair of DNA that is damaged by ultraviolet light or other mutagens. The polypeptide is ATP-dependent DNA helicase Q1 (RECQL) (Pongo abelii (Sumatran orangutan)).